Reading from the N-terminus, the 225-residue chain is MAGPASVAGDVFVDALPYFDQGYDATGVREAAAALVEEETRRYRPTKNYLSYLPTPDFSAFETEIMRNEFERLAARQPMELLSMKRYELPAPSSGQKNDMTAWQDCVNNSMAQLEHQAVRIENLELMAQYGTNAWKMSNDNLALMIENSQKELQNVRKEIQDLNWQRKNDQLAGGAKLRELESNWVSLVSKNYEIERAIVQLENEVAQMKQQQGDENKENIRQDF.

Positions 138-222 (SNDNLALMIE…QGDENKENIR (85 aa)) form a coiled coil.

It belongs to the SPF27 family. Component of the pre-catalytic and catalytic spliceosome complexes. Component of the postcatalytic spliceosome P complex.

It localises to the nucleus. In terms of biological role, required for pre-mRNA splicing as component of the activated spliceosome. May have a scaffolding role in the spliceosome assembly as it contacts all other components of the core complex. This Danio rerio (Zebrafish) protein is Pre-mRNA-splicing factor SPF27 (bcas2).